The following is a 475-amino-acid chain: Methyltransferase-like protein 25B (475 aa).

Positions Asn185–His210 form a coiled coil. The chain crosses the membrane as a helical span at residues Val406–Leu426.

This sequence belongs to the METTL25 family.

It is found in the membrane. The polypeptide is Methyltransferase-like protein 25B (Rattus norvegicus (Rat)).